Reading from the N-terminus, the 235-residue chain is MSVISMKQLLEAGVHFGHQTRRWNPKMAPYIFTERNGIYIIDLQQTVEKLEQAYEFVKKLAMEGGTILFVGTKKQAQDSIKEEAERCGMFYVNQRWLGGTLTNFKTIRGRIQRLKELKKMEEDGTFDVLPKKEVIKLRKEKERLQKFLGGIENMQSLPSALFIVDPKKEAIAVAEARSLEIPIVAIVDTNCDPELIDYPIPGNDDAIRAVKLITSKIADAVIEGNQGEQFAASEE.

The protein belongs to the universal ribosomal protein uS2 family.

This Thermoanaerobacter sp. (strain X514) protein is Small ribosomal subunit protein uS2.